The sequence spans 396 residues: F-box protein pof13 (396 aa).

One can recognise an F-box domain in the interval K40–N89.

As to quaternary structure, part of a SCF (SKP1-cullin-F-box) protein ligase complex. Interacts with skp1.

Its subcellular location is the cytoplasm. It participates in protein modification; protein ubiquitination. The chain is F-box protein pof13 (pof13) from Schizosaccharomyces pombe (strain 972 / ATCC 24843) (Fission yeast).